The following is a 309-amino-acid chain: MPVINNQVVLKHLVSMELLTNEEVLGLISRGSEFKAKNVPIANNSHYFTSNLFFENSTRTHKSFEMAERHMGLQVVEFNTDTSSVNKGETLYDTILTMSALGVDICVVRHPEVDYYQSLIKSPSITASIVNGGDGSGQHPSQCLLDLMTIYEEFGHFEGLKIMIAGDLVHSRVAKSNMQILKRLGAEIYFSGPDEWYSKEFEAYGEYRKIDDIIDQLDVLMLLRVQHERHNGSAGFSKEEYHKNFGLTEERYEKLKDTAIIMHPAPVNRNAEIADSLVEAKKARIVAQMENGVYVRMAILEAILNGRSA.

Carbamoyl phosphate-binding residues include Arg59 and Thr60. Lys87 provides a ligand contact to L-aspartate. Positions 109, 139, and 142 each coordinate carbamoyl phosphate. L-aspartate-binding residues include Arg172 and Arg224. Residues Ala265 and Pro266 each contribute to the carbamoyl phosphate site.

This sequence belongs to the aspartate/ornithine carbamoyltransferase superfamily. ATCase family. Heterododecamer (2C3:3R2) of six catalytic PyrB chains organized as two trimers (C3), and six regulatory PyrI chains organized as three dimers (R2).

The catalysed reaction is carbamoyl phosphate + L-aspartate = N-carbamoyl-L-aspartate + phosphate + H(+). Its pathway is pyrimidine metabolism; UMP biosynthesis via de novo pathway; (S)-dihydroorotate from bicarbonate: step 2/3. Functionally, catalyzes the condensation of carbamoyl phosphate and aspartate to form carbamoyl aspartate and inorganic phosphate, the committed step in the de novo pyrimidine nucleotide biosynthesis pathway. This Streptococcus uberis (strain ATCC BAA-854 / 0140J) protein is Aspartate carbamoyltransferase catalytic subunit.